We begin with the raw amino-acid sequence, 154 residues long: Endoribonuclease YbeY (154 aa).

Zn(2+)-binding residues include His-120, His-124, and His-130.

This sequence belongs to the endoribonuclease YbeY family. Zn(2+) serves as cofactor.

It localises to the cytoplasm. Single strand-specific metallo-endoribonuclease involved in late-stage 70S ribosome quality control and in maturation of the 3' terminus of the 16S rRNA. This is Endoribonuclease YbeY from Oceanobacillus iheyensis (strain DSM 14371 / CIP 107618 / JCM 11309 / KCTC 3954 / HTE831).